The sequence spans 118 residues: Ribonuclease P protein component (118 aa).

This sequence belongs to the RnpA family. Consists of a catalytic RNA component (M1 or rnpB) and a protein subunit.

The catalysed reaction is Endonucleolytic cleavage of RNA, removing 5'-extranucleotides from tRNA precursor.. Its function is as follows. RNaseP catalyzes the removal of the 5'-leader sequence from pre-tRNA to produce the mature 5'-terminus. It can also cleave other RNA substrates such as 4.5S RNA. The protein component plays an auxiliary but essential role in vivo by binding to the 5'-leader sequence and broadening the substrate specificity of the ribozyme. The chain is Ribonuclease P protein component from Shewanella oneidensis (strain ATCC 700550 / JCM 31522 / CIP 106686 / LMG 19005 / NCIMB 14063 / MR-1).